A 167-amino-acid polypeptide reads, in one-letter code: RNA pyrophosphohydrolase (167 aa).

Positions 8 to 159 constitute a Nudix hydrolase domain; it reads PYRTCVGVML…KRPVYERVVK (152 aa). The Nudix box motif lies at 47–68; sequence GGVDPGEDTWAAAKRELYEETS.

Belongs to the Nudix hydrolase family. RppH subfamily. The cofactor is a divalent metal cation.

Accelerates the degradation of transcripts by removing pyrophosphate from the 5'-end of triphosphorylated RNA, leading to a more labile monophosphorylated state that can stimulate subsequent ribonuclease cleavage. This Bradyrhizobium diazoefficiens (strain JCM 10833 / BCRC 13528 / IAM 13628 / NBRC 14792 / USDA 110) protein is RNA pyrophosphohydrolase.